The chain runs to 427 residues: UPF0229 protein YeaH (427 aa).

Over residues N79–R90 the composition is skewed to basic and acidic residues. The disordered stretch occupies residues N79–E110. The segment covering Q92–Q102 has biased composition (gly residues).

Belongs to the UPF0229 family.

The polypeptide is UPF0229 protein YeaH (Escherichia coli O139:H28 (strain E24377A / ETEC)).